The sequence spans 276 residues: D-apionate oxidoisomerase (276 aa).

NAD(+) is bound by residues 12-14, Glu33, and Asp69; that span reads GKM. Residues His114 and Glu184 each contribute to the Zn(2+) site.

It belongs to the ApnO family. The cofactor is Zn(2+).

It catalyses the reaction D-apionate + NAD(+) = 3-oxoisoapionate + NADH + H(+). Its pathway is carbohydrate metabolism. Involved in catabolism of D-apiose. Catalyzes the conversion of D-apionate to 3-oxo-isoapionate. This chain is D-apionate oxidoisomerase, found in Cupriavidus necator (strain ATCC 43291 / DSM 13513 / CCUG 52238 / LMG 8453 / N-1) (Ralstonia eutropha).